Here is a 328-residue protein sequence, read N- to C-terminus: Putative glycosyltransferase 41 (328 aa).

This sequence belongs to the glycosyltransferase group 1 family. Glycosyltransferase 4 subfamily.

In Sulfolobus islandicus filamentous virus (isolate Iceland/Hveragerdi) (SIFV), this protein is Putative glycosyltransferase 41 (SIFV0041).